The following is a 153-amino-acid chain: UPF0260 protein CKO_01185 (153 aa).

The protein belongs to the UPF0260 family.

This is UPF0260 protein CKO_01185 from Citrobacter koseri (strain ATCC BAA-895 / CDC 4225-83 / SGSC4696).